The chain runs to 329 residues: Delta-aminolevulinic acid dehydratase (329 aa).

Lys202 functions as the Schiff-base intermediate with substrate in the catalytic mechanism. Positions 212 and 223 each coordinate 5-aminolevulinate. Glu239 is a binding site for Mg(2+). Lys254 functions as the Schiff-base intermediate with substrate in the catalytic mechanism. Ser280 and Tyr319 together coordinate 5-aminolevulinate.

Belongs to the ALAD family. In terms of assembly, homooctamer.

It catalyses the reaction 2 5-aminolevulinate = porphobilinogen + 2 H2O + H(+). The protein operates within porphyrin-containing compound metabolism; protoporphyrin-IX biosynthesis; coproporphyrinogen-III from 5-aminolevulinate: step 1/4. Its function is as follows. Catalyzes an early step in the biosynthesis of tetrapyrroles. Binds two molecules of 5-aminolevulinate per subunit, each at a distinct site, and catalyzes their condensation to form porphobilinogen. This chain is Delta-aminolevulinic acid dehydratase (hemB), found in Mycobacterium tuberculosis (strain CDC 1551 / Oshkosh).